The chain runs to 159 residues: Transcription elongation factor GreA (159 aa).

The protein belongs to the GreA/GreB family.

Functionally, necessary for efficient RNA polymerase transcription elongation past template-encoded arresting sites. The arresting sites in DNA have the property of trapping a certain fraction of elongating RNA polymerases that pass through, resulting in locked ternary complexes. Cleavage of the nascent transcript by cleavage factors such as GreA or GreB allows the resumption of elongation from the new 3'terminus. GreA releases sequences of 2 to 3 nucleotides. The chain is Transcription elongation factor GreA from Buchnera aphidicola subsp. Cinara cedri (strain Cc).